The chain runs to 692 residues: 5-taurinomethyluridine-[tRNA] synthase subunit MTO1, mitochondrial (692 aa).

The transit peptide at 1-25 (MFYFRGCGRWVAASFTKLQFPLARL) directs the protein to the mitochondrion. Residues 43 to 48 (GGGHAG), Val-155, Ser-218, and Gln-407 each bind FAD. Residue Lys-508 is modified to N6-methyllysine.

It belongs to the MnmG family. Homodimer; forms a dimer in the presence of potassium. Interacts with GTPBP3; forms the GTPBP3-MTO1 complex composed of homodimers of GTPBP3 and MTO1. The cofactor is FAD.

Its subcellular location is the mitochondrion. The enzyme catalyses 5,10-methylenetetrahydrofolate + uridine(34) in tRNA + taurine + GTP + A + H2O = 5-taurinomethyluridine(34) in tRNA + 7,8-dihydrofolate + GDP + AH2 + phosphate + H(+). In terms of biological role, component of the GTPBP3-MTO1 complex that catalyzes the 5-taurinomethyluridine (taum(5)U) modification at the 34th wobble position (U34) of mitochondrial tRNAs (mt-tRNAs), which plays a role in mt-tRNA decoding and mitochondrial translation. Taum(5)U formation on mammalian mt-tRNA requires the presence of both GTPBP3-mediated GTPase activity and MTO1 catalytic activity. This is 5-taurinomethyluridine-[tRNA] synthase subunit MTO1, mitochondrial (MTO1) from Pongo abelii (Sumatran orangutan).